Reading from the N-terminus, the 134-residue chain is UPF0412 protein YaaI (134 aa).

The first 23 residues, 1 to 23 (MRSVLTISASLLFGLALSSVAHA), serve as a signal peptide directing secretion.

Belongs to the UPF0412 family.

In Salmonella paratyphi B (strain ATCC BAA-1250 / SPB7), this protein is UPF0412 protein YaaI.